A 201-amino-acid chain; its full sequence is UPF0301 protein Atu0781 (201 aa).

It belongs to the UPF0301 (AlgH) family.

This Agrobacterium fabrum (strain C58 / ATCC 33970) (Agrobacterium tumefaciens (strain C58)) protein is UPF0301 protein Atu0781.